Consider the following 251-residue polypeptide: Vitamin B12 import ATP-binding protein BtuD (251 aa).

The ABC transporter domain occupies 2 to 236 (IRVNSLQVDS…EVLQSVFGTS (235 aa)). 30-37 (GPNGCGKS) contacts ATP.

This sequence belongs to the ABC transporter superfamily. Vitamin B12 importer (TC 3.A.1.13.1) family. In terms of assembly, the complex is composed of two ATP-binding proteins (BtuD), two transmembrane proteins (BtuC) and a solute-binding protein (BtuF).

It localises to the cell inner membrane. It carries out the reaction an R-cob(III)alamin(out) + ATP + H2O = an R-cob(III)alamin(in) + ADP + phosphate + H(+). Part of the ABC transporter complex BtuCDF involved in vitamin B12 import. Responsible for energy coupling to the transport system. The protein is Vitamin B12 import ATP-binding protein BtuD of Vibrio cholerae serotype O1 (strain ATCC 39541 / Classical Ogawa 395 / O395).